Consider the following 263-residue polypeptide: MQTRLLRTLLSLTLSLLILSMALANRGCSNSSSQLLSQLQNQANLTGNTESLLEPYIRLQNLNTPDLRAACTQHSVAFPSEDTLRQLSKPHFLSTVYTTLDRVLYQLDALRQKFLKTPAFPKLDSARHNILGIRNNVFCMARLLNHSLEIPEPTQTDSGASRSTTTPDVFNTKIGSCGFLWGYHRFMGSVGRVFREWDDGSTRSRRQSPLRARRKGTRRIRVRHKGTRRIRVRRKGTRRIWVRRKGSRKIRPSRSTQSPTTRA.

An N-terminal signal peptide occupies residues 1–24 (MQTRLLRTLLSLTLSLLILSMALA). Cystine bridges form between Cys28–Cys139 and Cys71–Cys177. Asn30, Asn44, and Asn145 each carry an N-linked (GlcNAc...) asparagine glycan. Positions 207-263 (QSPLRARRKGTRRIRVRHKGTRRIRVRRKGTRRIWVRRKGSRKIRPSRSTQSPTTRA) are excised as a propeptide. The segment covering 241–252 (WVRRKGSRKIRP) has biased composition (basic residues). The segment at 241 to 263 (WVRRKGSRKIRPSRSTQSPTTRA) is disordered. Residues 253-263 (SRSTQSPTTRA) show a composition bias toward polar residues.

It belongs to the LIF/OSM family. In terms of processing, propeptide processing is not important for receptor binding activity but may be important growth-inhibitory activity.

Its subcellular location is the secreted. Its function is as follows. Growth regulator. Inhibits the proliferation of a number of tumor cell lines. It regulates cytokine production, including IL-6, G-CSF and GM-CSF from endothelial cells. Uses only type II OSM receptor (heterodimers composed of OSMR and IL6ST). Involved in the maturation of fetal hepatocytes, thereby promoting liver development and regeneration. In Mus musculus (Mouse), this protein is Oncostatin-M (Osm).